The following is a 213-amino-acid chain: Adenylate kinase (213 aa).

10 to 15 is a binding site for ATP; the sequence is GAGKGT. The interval 30-59 is NMP; sequence STGDMLRAAVAAGSEVGLRAKAAMESGSLV. AMP-binding positions include Thr31, Arg36, 57–59, 85–88, and Gln92; these read SLV and GFPR. The interval 126-163 is LID; the sequence is GRSSCEKCGEGYHDSFKPSAQPNVCDKCSGTLKRRADD. Arg127 is a binding site for ATP. Zn(2+) contacts are provided by Cys130, Cys133, Cys150, and Cys153. Residues Arg160 and Arg171 each contribute to the AMP site. Gln199 contributes to the ATP binding site.

The protein belongs to the adenylate kinase family. Monomer.

The protein resides in the cytoplasm. It carries out the reaction AMP + ATP = 2 ADP. The protein operates within purine metabolism; AMP biosynthesis via salvage pathway; AMP from ADP: step 1/1. Functionally, catalyzes the reversible transfer of the terminal phosphate group between ATP and AMP. Plays an important role in cellular energy homeostasis and in adenine nucleotide metabolism. The sequence is that of Adenylate kinase from Magnetococcus marinus (strain ATCC BAA-1437 / JCM 17883 / MC-1).